Consider the following 434-residue polypeptide: Pancreatic lipase-related protein 2 (434 aa).

Cysteines 4 and 10 form a disulfide. The interval 76 to 88 (IHGFTDSGENSWL) is required for galactolipase activity. The cysteines at positions 92 and 103 are disulfide-linked. Residue serine 154 is the Nucleophile of the active site. The active-site Charge relay system is aspartate 178. Residues glutamate 189, arginine 192, aspartate 194, and aspartate 197 each coordinate Ca(2+). Cysteine 239 and cysteine 245 are disulfide-bonded. The required for galactolipase activity stretch occupies residues 240-244 (KTGIS). The Charge relay system role is filled by histidine 247. 2 cysteine pairs are disulfide-bonded: cysteine 269–cysteine 280 and cysteine 283–cysteine 288. Asparagine 318 carries N-linked (GlcNAc...) asparagine glycosylation. A PLAT domain is found at 322–434 (WRYKVTVTLS…ENVEQTLSPC (113 aa)). A disulfide bridge links cysteine 418 with cysteine 434.

This sequence belongs to the AB hydrolase superfamily. Lipase family. In terms of tissue distribution, pancreas.

The protein resides in the secreted. The protein localises to the zymogen granule membrane. It is found in the cell projection. It localises to the neuron projection. It catalyses the reaction a triacylglycerol + H2O = a diacylglycerol + a fatty acid + H(+). The catalysed reaction is a 1,2-diacyl-3-O-(beta-D-galactosyl)-sn-glycerol + 2 H2O = 3-beta-D-galactosyl-sn-glycerol + 2 a fatty acid + 2 H(+). The enzyme catalyses 1,2,3-tri-(9Z-octadecenoyl)-glycerol + H2O = di-(9Z)-octadecenoylglycerol + (9Z)-octadecenoate + H(+). It carries out the reaction di-(9Z)-octadecenoylglycerol + H2O = (9Z-octadecenoyl)-glycerol + (9Z)-octadecenoate + H(+). It catalyses the reaction (9Z-octadecenoyl)-glycerol + H2O = glycerol + (9Z)-octadecenoate + H(+). The catalysed reaction is 1-(9Z-octadecenoyl)-glycerol + H2O = glycerol + (9Z)-octadecenoate + H(+). The enzyme catalyses 1,2,3-tripropanoylglycerol + H2O = dipropanoylglycerol + propanoate + H(+). It carries out the reaction 1,2,3-tributanoylglycerol + H2O = dibutanoylglycerol + butanoate + H(+). It catalyses the reaction 1,2,3-trioctanoylglycerol + H2O = dioctanoylglycerol + octanoate + H(+). The catalysed reaction is 1,2-didecanoylglycerol + H2O = decanoylglycerol + decanoate + H(+). The enzyme catalyses long chain 1,2-diacyl-3-O-beta-D-galactosyl-sn-glycerol + H2O = long chain acyl-3-O-beta-D-galactosyl-sn-glycerol + a fatty acid + H(+). It carries out the reaction 1,2-dioctanoyl-3-O-beta-D-galactosyl-sn-glycerol + H2O = octanoyl-3-(beta-D-galactosyl)-sn-glycerol + octanoate + H(+). It catalyses the reaction 1,2-didodecanoyl-3-beta-D-galactosyl-sn-glycerol + H2O = dodecanoyl-3-beta-D-galactosyl-sn-glycerol + dodecanoate + H(+). The catalysed reaction is 1-beta-D-galactosyl-2,3-didodecanoyl-sn-glycerol + H2O = 1-beta-D-galactosyl-dodecanoyl-sn-glycerol + dodecanoate + H(+). The enzyme catalyses a 1,2-diacyl-3-O-[alpha-D-galactosyl-(1-&gt;6)-beta-D-galactosyl]-sn-glycerol + H2O = acyl-3-O-[alpha-D-galactosyl-(1-&gt;6)-beta-D-galactosyl]-sn-glycerol + a fatty acid + H(+). It carries out the reaction long chain 1,2-diacyl-3-O-[alpha-D-galactosyl-(1-&gt;6)-beta-D-galactosyl]-sn-glycerol + H2O = long chain acyl-3-O-[alpha-D-galactosyl-(1-&gt;6)-beta-D-galactosyl]-sn-glycerol + a fatty acid + H(+). It catalyses the reaction 1,2-dioctanoyl-3-O-[alpha-D-galactosyl-(1-&gt;6)-beta-D-galactosyl]-sn-glycerol + H2O = octanoyl-3-O-[alpha-D-galactosyl-(1-&gt;6)-beta-D-galactosyl]-sn-glycerol + octanoate + H(+). The catalysed reaction is 1,2-didodecanoyl-3-O-[alpha-D-galactosyl-(1-&gt;6)-beta-D-galactosyl]-sn-glycerol + H2O = dodecanoyl-3-O-[alpha-D-galactosyl-(1-&gt;6)-beta-D-galactosyl]-sn-glycerol + dodecanoate + H(+). The enzyme catalyses a 1,2-diacyl-sn-glycero-3-phosphocholine + H2O = a monoacyl-sn-glycero-3-phosphocholine + a fatty acid + H(+). It participates in glycerolipid metabolism; triacylglycerol degradation. Its pathway is glycolipid metabolism. CLPS stimulates triacylglycerol lipase activity. Not inhibited by bile salts. Its function is as follows. Lipase that primarily hydrolyzes triglycerides and galactosylglycerides. In neonates, may play a major role in pancreatic digestion of dietary fats such as milk fat globules enriched in long-chain triglycerides. Hydrolyzes short-, medium- and long-chain fatty acyls in triglycerides without apparent positional specificity. Can completely deacylate triacylglycerols. When the liver matures and bile salt synthesis increases, likely functions mainly as a galactolipase and monoacylglycerol lipase. Hydrolyzes monogalactosyldiglycerols (MGDG) and digalactosyldiacylglycerols (DGDG) present in a plant-based diet, releasing long-chain polyunsaturated fatty acids. Hydrolyzes medium- and long-chain fatty acyls in galactolipids. May act together with LIPF to hydrolyze partially digested triglycerides. Hydrolyzes long-chain monoglycerides with high efficiency. In cytotoxic T cells, contributes to perforin-dependent cell lysis, but is unlikely to mediate direct cytotoxicity. Also has low phospholipase activity. In neurons, required for the localization of the phospholipid 1-oleoyl-2-palmitoyl-PC (OPPC) to neurite tips through acyl chain remodeling of membrane phospholipids. The resulting OPPC-rich lipid membrane domain recruits the t-SNARE protein STX4 by selectively interacting with the STX4 transmembrane domain and this promotes surface expression of the dopamine transporter SLC6A3/DAT at neurite tips by facilitating fusion of SLC6A3-containing transport vesicles with the plasma membrane. In Cavia porcellus (Guinea pig), this protein is Pancreatic lipase-related protein 2.